A 147-amino-acid chain; its full sequence is Hemoglobin subunit beta (147 aa).

Val2 carries the post-translational modification N-acetylvaline. In terms of domain architecture, Globin spans His3–His147. At Thr13 the chain carries Phosphothreonine. Residue Ser45 is modified to Phosphoserine. At Lys60 the chain carries N6-acetyllysine. Position 64 (His64) interacts with heme b. Lys83 is subject to N6-acetyllysine. Heme b is bound at residue His93. At Cys94 the chain carries S-nitrosocysteine. Lys145 is modified (N6-acetyllysine).

The protein belongs to the globin family. Heterotetramer of two alpha chains and two beta chains. Red blood cells.

Involved in oxygen transport from the lung to the various peripheral tissues. The protein is Hemoglobin subunit beta (HBB) of Tachyglossus aculeatus aculeatus (Southeast Australian short-beaked echidna).